The sequence spans 429 residues: Glutamate-1-semialdehyde 2,1-aminomutase (429 aa).

Lys-265 is subject to N6-(pyridoxal phosphate)lysine.

This sequence belongs to the class-III pyridoxal-phosphate-dependent aminotransferase family. HemL subfamily. Homodimer. The cofactor is pyridoxal 5'-phosphate.

Its subcellular location is the cytoplasm. The catalysed reaction is (S)-4-amino-5-oxopentanoate = 5-aminolevulinate. It participates in porphyrin-containing compound metabolism; protoporphyrin-IX biosynthesis; 5-aminolevulinate from L-glutamyl-tRNA(Glu): step 2/2. In Shewanella piezotolerans (strain WP3 / JCM 13877), this protein is Glutamate-1-semialdehyde 2,1-aminomutase.